Consider the following 206-residue polypeptide: FMN-dependent NADH:quinone oxidoreductase 1 (206 aa).

FMN contacts are provided by residues S10 and 16–18 (SLS).

This sequence belongs to the azoreductase type 1 family. In terms of assembly, homodimer. It depends on FMN as a cofactor.

It catalyses the reaction 2 a quinone + NADH + H(+) = 2 a 1,4-benzosemiquinone + NAD(+). The catalysed reaction is N,N-dimethyl-1,4-phenylenediamine + anthranilate + 2 NAD(+) = 2-(4-dimethylaminophenyl)diazenylbenzoate + 2 NADH + 2 H(+). Its function is as follows. Quinone reductase that provides resistance to thiol-specific stress caused by electrophilic quinones. Also exhibits azoreductase activity. Catalyzes the reductive cleavage of the azo bond in aromatic azo compounds to the corresponding amines. This chain is FMN-dependent NADH:quinone oxidoreductase 1, found in Burkholderia lata (strain ATCC 17760 / DSM 23089 / LMG 22485 / NCIMB 9086 / R18194 / 383).